Here is a 192-residue protein sequence, read N- to C-terminus: Beta-glucosidase (192 aa).

Belongs to the glycosyl hydrolase 3 family.

It catalyses the reaction Hydrolysis of terminal, non-reducing beta-D-glucosyl residues with release of beta-D-glucose.. The protein operates within glycan metabolism; cellulose degradation. The chain is Beta-glucosidase from Schizophyllum commune (Split gill fungus).